The sequence spans 735 residues: Disintegrin and metalloproteinase domain-containing protein 2 (735 aa).

The signal sequence occupies residues 1-16 (MWRVLFLLSGLGGLWM). Residues 17–174 (DSNFDSLPVQ…FKLQSIEPQK (158 aa)) constitute a propeptide that is removed on maturation. The Extracellular portion of the chain corresponds to 17 to 686 (DSNFDSLPVQ…ENVYHSKPMR (670 aa)). Asparagine 76, asparagine 122, and asparagine 220 each carry an N-linked (GlcNAc...) asparagine glycan. The 198-residue stretch at 178-375 (KYIEMHVVVE…QKSQCLHNQP (198 aa)) folds into the Peptidase M12B domain. Cystine bridges form between cysteine 287–cysteine 370, cysteine 329–cysteine 354, cysteine 331–cysteine 336, and cysteine 445–cysteine 465. 3 N-linked (GlcNAc...) asparagine glycosylation sites follow: asparagine 353, asparagine 459, and asparagine 566. The 90-residue stretch at 384–473 (QAVCGNAKLE…SCPENHFIQT (90 aa)) folds into the Disintegrin domain. One can recognise an EGF-like domain in the interval 612–645 (LGYDCTTDKCNHRGVCNNKKHCHCSASYLPPDCS). Intrachain disulfides connect cysteine 616–cysteine 627, cysteine 621–cysteine 633, and cysteine 635–cysteine 644. The helical transmembrane segment at 687-707 (WPLFLFIPFFIIFCVLIAIMV) threads the bilayer. Over 708–735 (KVHFQRKKWRTEDYSTDEQPESESEPKG) the chain is Cytoplasmic. Residue serine 729 is modified to Phosphoserine.

As to quaternary structure, heterodimer with ADAM1/fertilin subunit alpha. The signal and the metalloprotease domain are cleaved during the epididymal maturation of the spermatozoa. In terms of tissue distribution, expressed specifically in testis.

It localises to the membrane. Its function is as follows. Sperm surface membrane protein that may be involved in sperm-egg plasma membrane adhesion and fusion during fertilization. Could have a direct role in sperm-zona binding or migration of sperm from the uterus into the oviduct. Interactions with egg membrane could be mediated via binding between its disintegrin-like domain to one or more integrins receptors on the egg. This is a non catalytic metalloprotease-like protein. This Macaca fascicularis (Crab-eating macaque) protein is Disintegrin and metalloproteinase domain-containing protein 2 (ADAM2).